The sequence spans 303 residues: Geranylgeranyl pyrophosphate synthase (303 aa).

Isopentenyl diphosphate is bound by residues K30, R33, and H62. D69 and D73 together coordinate Mg(2+). Residue R78 participates in dimethylallyl diphosphate binding. An isopentenyl diphosphate-binding site is contributed by R79. Residues K156, T157, Q190, K207, and K217 each contribute to the dimethylallyl diphosphate site.

Belongs to the FPP/GGPP synthase family. Mg(2+) serves as cofactor.

It is found in the cytoplasm. It catalyses the reaction isopentenyl diphosphate + dimethylallyl diphosphate = (2E)-geranyl diphosphate + diphosphate. The catalysed reaction is isopentenyl diphosphate + (2E)-geranyl diphosphate = (2E,6E)-farnesyl diphosphate + diphosphate. It carries out the reaction isopentenyl diphosphate + (2E,6E)-farnesyl diphosphate = (2E,6E,10E)-geranylgeranyl diphosphate + diphosphate. It functions in the pathway isoprenoid biosynthesis; farnesyl diphosphate biosynthesis; farnesyl diphosphate from geranyl diphosphate and isopentenyl diphosphate: step 1/1. The protein operates within isoprenoid biosynthesis; geranyl diphosphate biosynthesis; geranyl diphosphate from dimethylallyl diphosphate and isopentenyl diphosphate: step 1/1. Its pathway is isoprenoid biosynthesis; geranylgeranyl diphosphate biosynthesis; geranylgeranyl diphosphate from farnesyl diphosphate and isopentenyl diphosphate: step 1/1. Catalyzes the trans-addition of the three molecules of IPP onto DMAPP to form geranylgeranyl pyrophosphate. In Mucor circinelloides f. lusitanicus (Mucor racemosus var. lusitanicus), this protein is Geranylgeranyl pyrophosphate synthase.